A 682-amino-acid chain; its full sequence is Guanylate cyclase soluble subunit beta-2 (682 aa).

Histidine 43 is a binding site for heme. One can recognise a Guanylate cyclase domain in the interval 408–536; that stretch reads TILFSDVVTF…DTVNTASRME (129 aa). The segment at 592 to 667 is disordered; the sequence is MGRPSAPADG…QPSPDETKTS (76 aa). A compositionally biased stretch (polar residues) spans 649–667; that stretch reads RNSTDAVNNQPSPDETKTS.

Belongs to the adenylyl cyclase class-4/guanylyl cyclase family. Heterodimer of an alpha and a beta chain. Heme serves as cofactor. As to expression, kidney and liver.

The protein resides in the cytoplasm. The catalysed reaction is GTP = 3',5'-cyclic GMP + diphosphate. Activated by nitric oxide in the presence of magnesium or manganese ions. The chain is Guanylate cyclase soluble subunit beta-2 (Gucy1b2) from Rattus norvegicus (Rat).